The sequence spans 254 residues: Type III pantothenate kinase (254 aa).

Residue 22–29 (VLGNTHVR) coordinates ATP. Substrate-binding positions include Tyr89 and 93 to 96 (GLDR). Asp95 functions as the Proton acceptor in the catalytic mechanism. Asp115 contributes to the K(+) binding site. An ATP-binding site is contributed by Thr118. Thr173 serves as a coordination point for substrate.

The protein belongs to the type III pantothenate kinase family. In terms of assembly, homodimer. It depends on NH4(+) as a cofactor. K(+) is required as a cofactor.

The protein resides in the cytoplasm. The catalysed reaction is (R)-pantothenate + ATP = (R)-4'-phosphopantothenate + ADP + H(+). It participates in cofactor biosynthesis; coenzyme A biosynthesis; CoA from (R)-pantothenate: step 1/5. In terms of biological role, catalyzes the phosphorylation of pantothenate (Pan), the first step in CoA biosynthesis. The polypeptide is Type III pantothenate kinase (Synechococcus sp. (strain JA-2-3B'a(2-13)) (Cyanobacteria bacterium Yellowstone B-Prime)).